A 322-amino-acid chain; its full sequence is UDP-N-acetylenolpyruvoylglucosamine reductase (322 aa).

The FAD-binding PCMH-type domain maps to 36-202; the sequence is RAGGPAQVLF…TSVLFEGVPG (167 aa). Residue arginine 182 is part of the active site. Catalysis depends on serine 231, which acts as the Proton donor. Glutamate 301 is an active-site residue.

It belongs to the MurB family. It depends on FAD as a cofactor.

The protein resides in the cytoplasm. It catalyses the reaction UDP-N-acetyl-alpha-D-muramate + NADP(+) = UDP-N-acetyl-3-O-(1-carboxyvinyl)-alpha-D-glucosamine + NADPH + H(+). The protein operates within cell wall biogenesis; peptidoglycan biosynthesis. Cell wall formation. This Brucella canis (strain ATCC 23365 / NCTC 10854 / RM-666) protein is UDP-N-acetylenolpyruvoylglucosamine reductase.